The chain runs to 241 residues: tRNA pseudouridine synthase A (241 aa).

Catalysis depends on Asp-52, which acts as the Nucleophile. Tyr-111 serves as a coordination point for substrate.

This sequence belongs to the tRNA pseudouridine synthase TruA family. As to quaternary structure, homodimer.

The catalysed reaction is uridine(38/39/40) in tRNA = pseudouridine(38/39/40) in tRNA. In terms of biological role, formation of pseudouridine at positions 38, 39 and 40 in the anticodon stem and loop of transfer RNAs. The protein is tRNA pseudouridine synthase A of Ureaplasma parvum serovar 3 (strain ATCC 27815 / 27 / NCTC 11736).